We begin with the raw amino-acid sequence, 458 residues long: Argininosuccinate lyase (458 aa).

The protein belongs to the lyase 1 family. Argininosuccinate lyase subfamily.

The protein localises to the cytoplasm. The catalysed reaction is 2-(N(omega)-L-arginino)succinate = fumarate + L-arginine. Its pathway is amino-acid biosynthesis; L-arginine biosynthesis; L-arginine from L-ornithine and carbamoyl phosphate: step 3/3. This Lachnospira eligens (strain ATCC 27750 / DSM 3376 / VPI C15-48 / C15-B4) (Eubacterium eligens) protein is Argininosuccinate lyase.